A 147-amino-acid chain; its full sequence is Holdfast attachment protein A (147 aa).

Involved in attachment of the holdfast to the cell. The holdfast is a structure that allows the bacteria to firmly adheres to surfaces. The protein is Holdfast attachment protein A (hfaA) of Caulobacter vibrioides (strain ATCC 19089 / CIP 103742 / CB 15) (Caulobacter crescentus).